Reading from the N-terminus, the 127-residue chain is Ribosome-binding factor A (127 aa).

The protein belongs to the RbfA family. Monomer. Binds 30S ribosomal subunits, but not 50S ribosomal subunits or 70S ribosomes.

The protein localises to the cytoplasm. One of several proteins that assist in the late maturation steps of the functional core of the 30S ribosomal subunit. Associates with free 30S ribosomal subunits (but not with 30S subunits that are part of 70S ribosomes or polysomes). Required for efficient processing of 16S rRNA. May interact with the 5'-terminal helix region of 16S rRNA. The chain is Ribosome-binding factor A from Chloroflexus aggregans (strain MD-66 / DSM 9485).